The sequence spans 91 residues: Small ribosomal subunit protein uS15c (91 aa).

This sequence belongs to the universal ribosomal protein uS15 family. In terms of assembly, part of the 30S ribosomal subunit.

The protein localises to the plastid. It localises to the chloroplast. This is Small ribosomal subunit protein uS15c (rps15) from Cicer arietinum (Chickpea).